The chain runs to 508 residues: Aldehyde dehydrogenase family 7 member A1 (508 aa).

244–249 (GSSKVG) contributes to the NAD(+) binding site. Glu-266 serves as the catalytic Proton acceptor. Residue Cys-300 is the Nucleophile of the active site.

Belongs to the aldehyde dehydrogenase family. As to quaternary structure, homotetramer.

It catalyses the reaction an aldehyde + NAD(+) + H2O = a carboxylate + NADH + 2 H(+). Its function is as follows. May play a role in fruit development. The protein is Aldehyde dehydrogenase family 7 member A1 of Malus domestica (Apple).